A 1960-amino-acid chain; its full sequence is Myosin-9 (1960 aa).

An N-acetylalanine modification is found at A2. Residues 2–838 (AQQAADKYLY…RLFTKVKPLL (837 aa)) form a mediates interaction with LIMCH1 region. An N6-acetyllysine modification is found at K8. Y11 is subject to Phosphotyrosine. Residues 27–77 (AAKKLVWVPSSKNGFEPASLKEEVGEEAIVELVENGKKVKVNKDDIQKMNP) form the Myosin N-terminal SH3-like domain. Residues 81 to 776 (SKVEDMAELT…VLAHLEEERD (696 aa)) form the Myosin motor domain. K102 is subject to N6-acetyllysine. An ATP-binding site is contributed by 174–181 (GESGAGKT). K299, K435, and K613 each carry N6-acetyllysine. At S628 the chain carries Phosphoserine. The interval 654–676 (LAKLMATLRNTNPNFVRCIIPNH) is actin-binding. Y754 is modified (phosphotyrosine). Residues 779–808 (ITDVIIGFQACCRGYLARKAFAKRQQQLTA) enclose the IQ domain. Positions 841–1926 (IRHEDELLAK…LKNKLRRGDL (1086 aa)) form a coiled coil. K850 is modified (N6-succinyllysine). An N6-acetyllysine mark is found at K860, K975, and K1024. The segment covering 1035 to 1055 (RLRREEKQRQELEKTRRKLEG) has biased composition (basic and acidic residues). Residues 1035–1057 (RLRREEKQRQELEKTRRKLEGDS) are disordered. At S1114 the chain carries Phosphoserine. The interval 1117 to 1167 (QEDLESERASRNKAEKQKRDLGEELEALKTELEDTLDSTAAQQELRSKREQ) is disordered. Over residues 1122–1148 (SERASRNKAEKQKRDLGEELEALKTEL) the composition is skewed to basic and acidic residues. N6-acetyllysine occurs at positions 1234 and 1249. The tract at residues 1327 to 1352 (LSTKLKQMEDEKNSFREQLEEEEEAK) is disordered. Basic and acidic residues predominate over residues 1332–1352 (KQMEDEKNSFREQLEEEEEAK). 6 positions are modified to N6-acetyllysine: K1357, K1392, K1404, K1410, K1459, and K1638. The residue at position 1669 (K1669) is an N6-succinyllysine. A Phosphoserine modification is found at S1714. Residues 1768–1788 (LERSHAQKNENARQQLERQNK) form a disordered region. Residues K1793, K1802, and K1845 each carry the N6-acetyllysine modification. A disordered region spans residues 1877–1908 (RQLEEAEEEAQRANASRRKLQRELEDATETAD). R1923 bears the Omega-N-methylarginine mark. Residue T1939 is modified to Phosphothreonine. Residues 1939–1960 (TGDCSDEEVDGKADGADAKAAE) form a disordered region. The residue at position 1943 (S1943) is a Phosphoserine. A compositionally biased stretch (basic and acidic residues) spans 1948-1960 (DGKADGADAKAAE).

Belongs to the TRAFAC class myosin-kinesin ATPase superfamily. Myosin family. Myosin is a hexameric protein that consists of 2 heavy chain subunits (MHC), 2 alkali light chain subunits (MLC) and 2 regulatory light chain subunits (MLC-2). Interacts with RASIP1. Interacts with DDR1. Interacts with PDLIM2. Interacts with SVIL. Interacts with HTRA3. Interacts with Myo7a. Interacts with CFAP95. Interacts with LIMCH1; independently of the integration of MYH9 into the myosin complex. Interacts with RAB3A. Interacts with ZBED4. Interacts with S100A4; this interaction increases cell motility. In terms of processing, ISGylated. Post-translationally, ubiquitination.

Its subcellular location is the cytoplasm. It is found in the cytoskeleton. It localises to the cell cortex. The protein resides in the cytoplasmic vesicle. The protein localises to the secretory vesicle. Its subcellular location is the cortical granule. Functionally, cellular myosin that appears to play a role in cytokinesis, cell shape, and specialized functions such as secretion and capping. Required for cortical actin clearance prior to oocyte exocytosis. Promotes cell motility in conjunction with S100A4. During cell spreading, plays an important role in cytoskeleton reorganization, focal contact formation (in the margins but not the central part of spreading cells), and lamellipodial retraction; this function is mechanically antagonized by MYH10. In Mus musculus (Mouse), this protein is Myosin-9 (Myh9).